The chain runs to 390 residues: uncharacterized protein (390 aa).

Helical transmembrane passes span 4-24 (IWLFFSVMFVIGTDTFLLSPL), 40-60 (GWMVSAYALGYALFAFIAGPI), 68-88 (TVMLWGLAGFIVSTFLCGIAP), 98-118 (FAAGVSAAFVTPQIWASIPVI), 130-150 (IATAGLAASQMLGLPIGGFLA), 159-179 (FVLSACSLILLLILAAVMPGI), 205-225 (VILLAYFLFQTGNFASFSFLG), 236-256 (VSQIGAAMLVLGLGNMLGSLI), 273-293 (GMLLMGALYFALPFFPNLFLV), 295-315 (AGFFLTFFTAGIIFPLMMGVF), 329-349 (LSNAAMYAGTTVGTSIAGFLY), and 356-376 (GAVTGFTAILFILSMTLYQTI).

Belongs to the major facilitator superfamily.

The protein resides in the cell membrane. This is an uncharacterized protein from Bacillus subtilis (strain 168).